The chain runs to 166 residues: Dynein regulatory complex protein 8 (166 aa).

The EF-hand domain maps to 95–130 (DDYHTLLRAFRAFDPDGRGFIDAESFKSLLTGKGEA).

This sequence belongs to the DRC8 family. As to quaternary structure, component of the nexin-dynein regulatory complex (N-DRC).

The protein localises to the cytoplasm. The protein resides in the cytoskeleton. It is found in the flagellum axoneme. Its function is as follows. Component of the nexin-dynein regulatory complex (N-DRC), a key regulator of ciliary/flagellar motility which maintains the alignment and integrity of the distal axoneme and regulates microtubule sliding in motile axonemes. This Chlamydomonas reinhardtii (Chlamydomonas smithii) protein is Dynein regulatory complex protein 8.